The primary structure comprises 114 residues: Neurotrophic factor BDNF precursor form (114 aa).

3 disulfide bridges follow: Cys14–Cys81, Cys59–Cys110, and Cys69–Cys112.

It belongs to the NGF-beta family. In terms of assembly, monomers and homodimers. Binds to NTRK2/TRKB. Can form heterodimers with other neurotrophin family members, such as NTF3 and NTF4 (in vitro), but the physiological relevance of this is not clear. BDNF precursor form: interacts with the heterodimer formed by NGFR and SORCS2. Mature BDNF has much lower affinity for the heterodimer formed by NGFR and SORCS2. Post-translationally, N-glycosylated and glycosulfated, contrary to mature BDNF. In terms of processing, mature BDNF is produced by proteolytic removal of the propeptide, catalyzed by a FURIN family member. In addition, the precursor form is proteolytically cleaved within the propeptide, but this is not an obligatory intermediate for the production of mature BDNF. Can be converted into mature BDNF by plasmin (PLG).

The protein localises to the secreted. In terms of biological role, important signaling molecule that activates signaling cascades downstream of NTRK2. During development, promotes the survival and differentiation of selected neuronal populations of the peripheral and central nervous systems. Participates in axonal growth, pathfinding and in the modulation of dendritic growth and morphology. Major regulator of synaptic transmission and plasticity at adult synapses in many regions of the CNS. The versatility of BDNF is emphasized by its contribution to a range of adaptive neuronal responses including long-term potentiation (LTP), long-term depression (LTD), certain forms of short-term synaptic plasticity, as well as homeostatic regulation of intrinsic neuronal excitability. Its function is as follows. Important signaling molecule that activates signaling cascades downstream of NTRK2. Activates signaling cascades via the heterodimeric receptor formed by NGFR and SORCS2. Signaling via NGFR and SORCS2 plays a role in synaptic plasticity and long-term depression (LTD). Binding to NGFR and SORCS2 promotes neuronal apoptosis. Promotes neuronal growth cone collapse. The polypeptide is Neurotrophic factor BDNF precursor form (BDNF) (Macaca mulatta (Rhesus macaque)).